An 890-amino-acid chain; its full sequence is Receptor like protein 23 (890 aa).

An N-terminal signal peptide occupies residues 1-22; the sequence is MSKALLHLHFLSLFLLCCVCHS. The Extracellular segment spans residues 23 to 850; sequence SIFTLNFHFT…EEEEEVLNGR (828 aa). N-linked (GlcNAc...) asparagine glycans are attached at residues Asn-58, Asn-70, Asn-91, Asn-109, and Asn-145. LRR repeat units lie at residues 97 to 121, 123 to 145, 146 to 171, 173 to 195, 196 to 218, 220 to 243, 244 to 268, 270 to 290, 291 to 316, 318 to 339, 340 to 363, 364 to 389, 391 to 411, 412 to 436, 438 to 461, 462 to 485, 487 to 506, 507 to 527, 528 to 551, 553 to 575, 577 to 598, 599 to 623, 626 to 650, 699 to 724, 726 to 747, 748 to 771, and 773 to 796; these read FHQL…GFGN, KRLE…SFSN, LTML…GLRK, IVLD…LFEL, HQLR…KFGN, HRLE…ISNL, TRLT…NLTN, YELD…LLTL, PFLA…STSS, LEIM…ISKL, INLK…LFSS, LKSL…SYIP, TLEM…ILKT, LKEL…LWSL, LLQS…ILVN, SSVL…PLSI, GFGV…ICNR, SSLA…PPCL, RNLE…LCDG, SLRT…FVNC, SLKF…WLKA, LPNL…HQGP, FPEL…YFVN, LTSY…GLLK, LIAV…MANL, ENLE…LGSI, and FLAY…QITG. N-linked (GlcNAc...) asparagine glycans are attached at residues Asn-189, Asn-207, Asn-242, and Asn-265. Asn-311 is a glycosylation site (N-linked (GlcNAc...) asparagine). Asn-351 carries N-linked (GlcNAc...) asparagine glycosylation. Asn-461 is a glycosylation site (N-linked (GlcNAc...) asparagine). Residues Asn-505 and Asn-518 are each glycosylated (N-linked (GlcNAc...) asparagine). Asn-574 is a glycosylation site (N-linked (GlcNAc...) asparagine). Residue Asn-730 is glycosylated (N-linked (GlcNAc...) asparagine). Asn-778 is a glycosylation site (N-linked (GlcNAc...) asparagine). Residues 851-871 traverse the membrane as a helical segment; that stretch reads AVAIGYGSGLLLGLAIAQVIA. The Cytoplasmic portion of the chain corresponds to 872–890; it reads SYKPEWLVKIIGLNKRRKR.

This sequence belongs to the RLP family. Directly interacts with a 20-mer fragment (nlp20) from NLPs through its extracellular LRR domain. Component of a trimeric complex composed of RLP23, SOBIR1 and BAK1. BAK1 is recruited into a pre-formed RLP23-SOBIR1 complex in a ligand-dependent manner. Interacts with SOBIR1.

Its subcellular location is the cell membrane. Functionally, involved in the perception of necrosis and ethylene-inducing peptide 1-like proteins (NLPs), that act as extracellular signals mediating immune activation. Component of the RLP23-SOBIR1-BAK1 complex that mediates NLP-triggered immunity. In Arabidopsis thaliana (Mouse-ear cress), this protein is Receptor like protein 23.